A 429-amino-acid chain; its full sequence is Glucose-6-phosphate isomerase (429 aa).

The Proton donor role is filled by Glu-282. Catalysis depends on residues His-303 and Lys-418.

Belongs to the GPI family.

The protein localises to the cytoplasm. The catalysed reaction is alpha-D-glucose 6-phosphate = beta-D-fructose 6-phosphate. The protein operates within carbohydrate biosynthesis; gluconeogenesis. It participates in carbohydrate degradation; glycolysis; D-glyceraldehyde 3-phosphate and glycerone phosphate from D-glucose: step 2/4. In terms of biological role, catalyzes the reversible isomerization of glucose-6-phosphate to fructose-6-phosphate. The chain is Glucose-6-phosphate isomerase from Mesomycoplasma hyopneumoniae (strain J / ATCC 25934 / NCTC 10110) (Mycoplasma hyopneumoniae).